The primary structure comprises 101 residues: Small ribosomal subunit protein uS14 (101 aa).

The segment covering 1-10 (MAKNSMVERD) has biased composition (basic and acidic residues). The tract at residues 1–20 (MAKNSMVERDRKRRKLAQKY) is disordered.

It belongs to the universal ribosomal protein uS14 family. As to quaternary structure, part of the 30S ribosomal subunit. Contacts proteins S3 and S10.

In terms of biological role, binds 16S rRNA, required for the assembly of 30S particles and may also be responsible for determining the conformation of the 16S rRNA at the A site. The polypeptide is Small ribosomal subunit protein uS14 (Halorhodospira halophila (strain DSM 244 / SL1) (Ectothiorhodospira halophila (strain DSM 244 / SL1))).